We begin with the raw amino-acid sequence, 286 residues long: Ribosomal RNA small subunit methyltransferase A (286 aa).

Residues Asn31, Ile33, Gly58, Glu80, Asp106, and Asn125 each contribute to the S-adenosyl-L-methionine site.

It belongs to the class I-like SAM-binding methyltransferase superfamily. rRNA adenine N(6)-methyltransferase family. RsmA subfamily.

Its subcellular location is the cytoplasm. It carries out the reaction adenosine(1518)/adenosine(1519) in 16S rRNA + 4 S-adenosyl-L-methionine = N(6)-dimethyladenosine(1518)/N(6)-dimethyladenosine(1519) in 16S rRNA + 4 S-adenosyl-L-homocysteine + 4 H(+). Functionally, specifically dimethylates two adjacent adenosines (A1518 and A1519) in the loop of a conserved hairpin near the 3'-end of 16S rRNA in the 30S particle. May play a critical role in biogenesis of 30S subunits. The protein is Ribosomal RNA small subunit methyltransferase A of Wolbachia pipientis wMel.